Reading from the N-terminus, the 1680-residue chain is RAF-like serine/threonine-protein kinase PRAF (1680 aa).

Positions 86–163 are disordered; it reads FSPSDPHNSV…TPSDDGKDFP (78 aa). Positions 166–267 constitute a PB1 domain; sequence RVKFMCSFGG…SRLRVFLFPA (102 aa). Disordered regions lie at residues 363–388, 417–516, 556–580, 594–613, 641–672, 700–725, and 1186–1226; these read LTGN…PLLA, PQYT…DSQQ, PDML…QPQQ, GANH…SQQF, QSTS…PQLQ, RSFR…LHRQ, and LPNA…LGGQ. Positions 366-388 are enriched in low complexity; it reads NLSNRSNAPSAPSSAPSSPPLLA. A compositionally biased stretch (basic and acidic residues) spans 446 to 482; that stretch reads HEMHYRSTDSRRGPESPPKKFHDALHQDHPITVEQRR. Low complexity-rich tracts occupy residues 560-580 and 603-613; these read QSSG…QPQQ and QGDQQQQSQQF. Residues 641 to 651 are compositionally biased toward polar residues; sequence QSTSYHGSAPS. The segment covering 1204-1217 has biased composition (low complexity); the sequence is SRSSSSSLSELSKS. The residue at position 1248 (serine 1248) is a Phosphoserine. A compositionally biased stretch (basic and acidic residues) spans 1339-1354; it reads ASTVDKENQEEVRTGL. The tract at residues 1339-1372 is disordered; that stretch reads ASTVDKENQEEVRTGLDEPADEDKANSTGLGSDP. At serine 1365 the chain carries Phosphoserine. A Protein kinase domain is found at 1389–1655; sequence LEELRELGSG…SDIAKELRTM (267 aa). Residues 1395 to 1403 and lysine 1416 contribute to the ATP site; that span reads LGSGTFGTV. Aspartate 1518 functions as the Proton acceptor in the catalytic mechanism. A disordered region spans residues 1661 to 1680; that stretch reads PKTQAQTQGQSHPHPQMQIV.

This sequence belongs to the protein kinase superfamily. Ser/Thr protein kinase family. Hyperphosphorylated in response to auxin. Its phosphorylation state is also rapidly stimulated by photosynthetic activity (e.g. in response to blue light and red light irradiation); dephosphorylated in the darkness.

It localises to the cytoplasm. The catalysed reaction is L-seryl-[protein] + ATP = O-phospho-L-seryl-[protein] + ADP + H(+). It carries out the reaction L-threonyl-[protein] + ATP = O-phospho-L-threonyl-[protein] + ADP + H(+). Its activity is regulated as follows. Activated by auxin via rapid phosphorylation. Regulated by photosynthesis-activity-dependent changes in its phosphorylation status. Its function is as follows. RAF-like protein kinase acting as a central mediator of a fast response pathway to auxin involving proteins phosphorylation, and leading to rapid cellular responses including membrane depolarization and cytoplasmic streaming. Required for general growth and developmental process. Photosynthesis signaling kinase involved in the regulation of the sucrose metabolism involving PGM1. Necessary for optimal chloroplast electron transport rate (ETR). This chain is RAF-like serine/threonine-protein kinase PRAF, found in Marchantia polymorpha (Common liverwort).